The primary structure comprises 382 residues: Ribonuclease D (382 aa).

The 3'-5' exonuclease domain occupies 4 to 169; that stretch reads ITTTAELASV…DVFAALDADL (166 aa). Residues 208–289 form the HRDC domain; sequence KPKDLAVMME…QRGLARDPRE (82 aa).

This sequence belongs to the RNase D family. Requires a divalent metal cation as cofactor.

It is found in the cytoplasm. It catalyses the reaction Exonucleolytic cleavage that removes extra residues from the 3'-terminus of tRNA to produce 5'-mononucleotides.. Exonuclease involved in the 3' processing of various precursor tRNAs. Initiates hydrolysis at the 3'-terminus of an RNA molecule and releases 5'-mononucleotides. This Nitrobacter hamburgensis (strain DSM 10229 / NCIMB 13809 / X14) protein is Ribonuclease D.